Here is a 292-residue protein sequence, read N- to C-terminus: uncharacterized protein (292 aa).

10 helical membrane passes run 6 to 26 (LGIISVTLIWGYTWVAMKVGI), 32 to 52 (LLFSGLRLFIGAVPLFLILFI), 68 to 88 (IIMSLLMGLGYMGILTYGMQF), 94 to 114 (TSVLVYTMPIFVTVISHFSLN), 123 to 143 (MGLVCGLFGLLFIFGKEMLNI), 147 to 167 (ALFGELCVLVAALSWGIANVF), 182 to 202 (AWHLMMGAVMLLVFSFIFEAV), 214 to 234 (SLLFNGLLSTGFTFVVWFWVL), 242 to 262 (ASMALMFVPVLALFFGWLQLH), and 265 to 285 (ITINIILGALLICCGIFMNTF). EamA domains follow at residues 13–137 (LIWG…FIFG) and 159–285 (LSWG…MNTF).

The protein belongs to the EamA transporter family.

It is found in the cell membrane. This is an uncharacterized protein from Bacillus subtilis (strain 168).